The chain runs to 181 residues: Trafficking protein particle complex subunit 3 homolog (181 aa).

The S-palmitoyl cysteine moiety is linked to residue C70.

This sequence belongs to the TRAPP small subunits family. BET3 subfamily. As to quaternary structure, homodimer. Part of the multisubunit TRAPP (transport protein particle) complex.

The protein resides in the golgi apparatus. Its subcellular location is the cis-Golgi network. It localises to the endoplasmic reticulum. Its function is as follows. May play a role in vesicular transport from endoplasmic reticulum to Golgi. Required for the systemic spread of the RNAi response. The polypeptide is Trafficking protein particle complex subunit 3 homolog (Caenorhabditis briggsae).